Consider the following 465-residue polypeptide: Lactaldehyde dehydrogenase (465 aa).

220–225 (GSVEIG) is a binding site for NAD(+). Residues E240 and C274 contribute to the active site.

Belongs to the aldehyde dehydrogenase family. In terms of assembly, homotetramer.

The enzyme catalyses (S)-lactaldehyde + NAD(+) + H2O = (S)-lactate + NADH + 2 H(+). Its pathway is cofactor biosynthesis; coenzyme F420 biosynthesis. In terms of biological role, involved in F420 biosynthesis through the oxidation of lactaldehyde to lactate. This Methanococcus maripaludis (strain C7 / ATCC BAA-1331) protein is Lactaldehyde dehydrogenase.